Consider the following 2136-residue polypeptide: U5 small nuclear ribonucleoprotein 200 kDa helicase (2136 aa).

Phosphoserine is present on residues Ser-17 and Ser-26. Lys-46 participates in a covalent cross-link: Glycyl lysine isopeptide (Lys-Gly) (interchain with G-Cter in SUMO2). The interval 50 to 80 is disordered; the sequence is TRMGDKAQRTKPQMQEERRAKRRKRDEDRHD. The stretch at 54–84 forms a coiled coil; sequence DKAQRTKPQMQEERRAKRRKRDEDRHDINKM. The residue at position 225 (Ser-225) is a Phosphoserine. Thr-389 carries the post-translational modification Phosphothreonine. Residues 395 to 2129 form an interaction with C9orf78 and WBP4 region; sequence DLDQGGEALA…YKFSVDVKEA (1735 aa). A Helicase ATP-binding 1 domain is found at 490-673; sequence RAALETDENL…FLRVDPAKGL (184 aa). Residue 503 to 510 participates in ATP binding; the sequence is APTGAGKT. The short motif at 615–618 is the DEIH box element; that stretch reads DEIH. Residues 684-921 form the Helicase C-terminal 1 domain; that stretch reads PLEQTYVGIT…NAKDAVNWLG (238 aa). At Tyr-709 the chain carries Phosphotyrosine. Position 971 is an N6-acetyllysine (Lys-971). Residues 981–1286 form the SEC63 1 domain; it reads VTELGRIASH…SCETQLPVSF (306 aa). Residues 1282–2136 form an interaction with TSSC4 region; the sequence is LPVSFRHLIL…KEAETDSDSD (855 aa). The Helicase ATP-binding 2 domain occupies 1337 to 1512; sequence NTVYNSDDNV…WLGCSATSTF (176 aa). 1350–1357 provides a ligand contact to ATP; that stretch reads APTGSGKT. Position 1428 is a phosphothreonine (Thr-1428). Residues 1454–1457 carry the DEVH box motif; sequence DEVH. In terms of domain architecture, Helicase C-terminal 2 spans 1545 to 1753; it reads PVYHAITKHS…TIENKQDAVD (209 aa). Thr-1765 carries the phosphothreonine modification. In terms of domain architecture, SEC63 2 spans 1812 to 2124; it reads PLNLGMIAAY…GCDQEYKFSV (313 aa). Position 2002 is a phosphoserine (Ser-2002). Residue Thr-2131 is modified to Phosphothreonine. A phosphoserine mark is found at Ser-2133 and Ser-2135.

It belongs to the helicase family. SKI2 subfamily. Component of a core complex containing at least PRPF8, SNRNP200, EFTUD2 and SNRNP40. Component of the U5 snRNP and U4/U6-U5 tri-snRNP complexes, building blocks of the spliceosome. Component of the U4/U6-U5 tri-snRNP complex composed of the U4, U6 and U5 snRNAs and at least PRPF3, PRPF4, PRPF6, PRPF8, PRPF31, SNRNP200, TXNL4A, SNRNP40, DDX23, CD2BP2, PPIH, SNU13, EFTUD2, SART1 and USP39. Component of precatalytic, catalytic and postcatalytic spliceosomal complexes. Component of the minor spliceosome, which splices U12-type introns. Interacts with C9orf78; the interaction is direct and mutually exclusive with its interaction with WBP4. Interacts with WBP4; the interaction is mutually exclusive with its interaction with C9orf78. Interacts with PRPF8. Interacts with TSSC4; the interaction is direct, excludes recruitment of C9ORF78 and WBP4 to SNRNP200 and negatively regulates its RNA helicase activity. Widely expressed.

The protein localises to the nucleus. The catalysed reaction is ATP + H2O = ADP + phosphate + H(+). Catalyzes the ATP-dependent unwinding of U4/U6 RNA duplices, an essential step in the assembly of a catalytically active spliceosome. Plays a role in pre-mRNA splicing as a core component of precatalytic, catalytic and postcatalytic spliceosomal complexes. As a component of the minor spliceosome, involved in the splicing of U12-type introns in pre-mRNAs. Involved in spliceosome assembly, activation and disassembly. Mediates changes in the dynamic network of RNA-RNA interactions in the spliceosome. The polypeptide is U5 small nuclear ribonucleoprotein 200 kDa helicase (SNRNP200) (Homo sapiens (Human)).